The following is a 1279-amino-acid chain: Photoreceptor cilium actin regulator (1279 aa).

G2 is lipidated: N-myristoyl glycine. A lipid anchor (S-palmitoyl cysteine) is attached at C3. Disordered regions lie at residues 101–168, 380–598, 802–821, 860–1107, and 1127–1279; these read NKPQ…KGRV, AAQV…SHVE, EVSE…ENLP, ASHP…TTAK, and KSSS…KEIS. Over residues 126–168 the composition is skewed to basic and acidic residues; the sequence is FSGKESKENTPQETSKGNRESVCHQPDSQDHCRQSATESKGRV. Residues 477–491 show a composition bias toward acidic residues; that stretch reads SEEEDCSPEEEDELS. 2 stretches are compositionally biased toward basic and acidic residues: residues 535-547 and 580-598; these read LKMK…RIKF and GPER…SHVE. Residues 804-818 show a composition bias toward acidic residues; it reads SESEDISGDVEEDLE. Composition is skewed to polar residues over residues 886–901, 913–925, and 955–965; these read GSGS…SGST, DLNS…PSSE, and TNPTPGQSRTL. The span at 972 to 990 shows a compositional bias: basic and acidic residues; sequence FSRDPHSSEASRKGPERSL. Residues 1047-1062 are compositionally biased toward polar residues; sequence RKTTSPPCQHPQSNPA. A compositionally biased stretch (low complexity) spans 1076 to 1090; sequence PSSASCSSPSVSPSR. Residues 1091–1100 show a composition bias toward basic and acidic residues; it reads GSKDSIHSED. The span at 1226–1241 shows a compositional bias: polar residues; the sequence is WNNSRVPELQGSSTKR. Over residues 1259 to 1279 the composition is skewed to basic and acidic residues; sequence RMNRGQDRPQPESQPQHKEIS.

Specifically expressed in retina.

The protein localises to the cell projection. The protein resides in the cilium. It localises to the photoreceptor outer segment. It is found in the photoreceptor inner segment. Plays an essential role for normal photoreceptor cell maintenance and vision. The chain is Photoreceptor cilium actin regulator from Mus musculus (Mouse).